A 631-amino-acid polypeptide reads, in one-letter code: MQSNYSISYFLLILFTGTSSYFTIWNFVDHTRVGAFPEEDYIRLAYIIGGNFMTRLMFMQHFKSVLKYSDHFFRLHLITDENHRSDIHELMTSWNISNCEWFFHNLTEFEKRVAWIPNSHYSKYYGLSKLLIPEIIGNDIGKIMFMDVDIIFQTNIFDLWKQFRNFNNSQVFGMVENLSDWYLNKDGKKSVWPALGRGFNTGIIMFDLDKLRKNGWASKWRVVANKYLRIHGKTAMSDQDIFNAYIHDYPTEIIQIPCAYNYQLGALTKSKELCPETPLALHFNSQNKTVGKNYAFFDKIRKAFDEMDGSDLKRRRRSFKGNNQKDICHEYLPLDNFRIIPNAIGRMTKPAELCMVTQFSKDRLNHFLESANAWRHPISTAVYGKDKDLLDIAKAVTELNRTDITIHLVFEEPTESWMLDSLYPINFLRNVAIEHANCKYILMTDVDFVVLGDYGTIIDQTGNLKQKEVLVIPALEMTYPQLRLNLSNFLSRKDLVIEHLLNKTIQTFRETIWPSSHVPTNISKWIKSNRTYMVNYEKNYEPYFVIKKEECPFYDQRFGGFGWNKVTHVMQLKMMNYKFLVSPTSFMIHQNHNASKSLKRWRRDPHYQKCLHTLKNKFMKKTASRLGIKLR.

Residues 1 to 6 (MQSNYS) are Cytoplasmic-facing. The chain crosses the membrane as a helical; Signal-anchor for type II membrane protein span at residues 7–27 (ISYFLLILFTGTSSYFTIWNF). At 28 to 631 (VDHTRVGAFP…TASRLGIKLR (604 aa)) the chain is on the lumenal side. Asparagine 95, asparagine 105, asparagine 167, asparagine 177, asparagine 287, asparagine 400, asparagine 485, asparagine 502, asparagine 521, asparagine 529, and asparagine 593 each carry an N-linked (GlcNAc...) asparagine glycan.

It belongs to the glycosyltransferase 8 family.

Its subcellular location is the golgi apparatus membrane. Probable glycosyltransferase. This chain is Glycosyltransferase-like protein LARGE (lge-1), found in Caenorhabditis elegans.